The following is a 560-amino-acid chain: Thermosome subunit alpha (560 aa).

Positions 535–547 (SEKKGGEGSKEES) are enriched in basic and acidic residues. Residues 535–560 (SEKKGGEGSKEESGGEGGAGTPSLGD) form a disordered region.

It belongs to the TCP-1 chaperonin family. In terms of assembly, forms a heterooligomeric complex of two stacked nine-membered rings; one of alpha and the other of beta subunits. Sometimes called a 'rosettasome'.

The protein localises to the cytoplasm. The catalysed reaction is ATP + H2O = ADP + phosphate + H(+). Molecular chaperone; binds unfolded polypeptides in vitro, stimulates protein folding and has ATPase activity. One of the most abundant proteins in the cell at all temperatures. This is Thermosome subunit alpha (thsA) from Saccharolobus shibatae (strain ATCC 51178 / DSM 5389 / JCM 8931 / NBRC 15437 / B12) (Sulfolobus shibatae).